The chain runs to 153 residues: Phosphopantetheine adenylyltransferase (153 aa).

Residue serine 11 participates in substrate binding. Residues 11–12 and histidine 19 contribute to the ATP site; that span reads SF. Substrate contacts are provided by lysine 43, threonine 75, and arginine 89. Residues 90-92, glutamate 100, and 124-130 contribute to the ATP site; these read GIR and LSFISSS.

The protein belongs to the bacterial CoaD family. As to quaternary structure, homohexamer. Mg(2+) serves as cofactor.

The protein resides in the cytoplasm. It carries out the reaction (R)-4'-phosphopantetheine + ATP + H(+) = 3'-dephospho-CoA + diphosphate. It participates in cofactor biosynthesis; coenzyme A biosynthesis; CoA from (R)-pantothenate: step 4/5. Reversibly transfers an adenylyl group from ATP to 4'-phosphopantetheine, yielding dephospho-CoA (dPCoA) and pyrophosphate. This Porphyromonas gingivalis (strain ATCC 33277 / DSM 20709 / CIP 103683 / JCM 12257 / NCTC 11834 / 2561) protein is Phosphopantetheine adenylyltransferase.